The sequence spans 121 residues: Large ribosomal subunit protein bL12 (121 aa).

This sequence belongs to the bacterial ribosomal protein bL12 family. In terms of assembly, homodimer. Part of the ribosomal stalk of the 50S ribosomal subunit. Forms a multimeric L10(L12)X complex, where L10 forms an elongated spine to which 2 to 4 L12 dimers bind in a sequential fashion. Binds GTP-bound translation factors.

Its function is as follows. Forms part of the ribosomal stalk which helps the ribosome interact with GTP-bound translation factors. Is thus essential for accurate translation. In Shigella sonnei (strain Ss046), this protein is Large ribosomal subunit protein bL12.